The following is a 689-amino-acid chain: MTTQDFLLEIGCEELPPRRLNQLSQALSQTIKSELEKADLSFENIHRYATPRRLAVLVNNLALQQPQRKIERQGPSVKAAFDKDQTPTLACFGFAQSCGVSTAQLKVKKTKKGEFIYCEIEQPGQNTLDLLPNIIQSALKQLPTPKAMRWGDHKEFFVRPVHWIILMLGKDLVPATLLGKMASCETRGHRFHHPKNILVTKPDDYQKLLLTHGMVIADFEKRREKIRDLIQKAASEKGEAIIDEGLLEEVTGMVEWPVILVGNFKAEFLKLPPEVLITTMKVHQRTFPIKNKNGDLLPYFIIVSNIESKNPKRVIVGNERVINARLADASFFYDNDLRTSLENRLPKLGDVIFQRQLGTLADKARRIEKLAAFIAKQINIDEQLAARAGLLSKCDLVSEMVYEFPTLQGIMGYYYAFHDKEPPLVAEAIKEHYLPRFSGDQLPRNLLSPCVAVADRIDTIIGIIGINKSPTGDKDPFALRRAALGILRILIEKELSLDLFALLNEAKNNYAVELPNVNVVNQSFDFIIERLRAWYLEKEVPASVFMAVLASHPDDPLDFDRRIKAVQHFQTLPEADALAAANKRVSNILKKQAAELKSKTIDHSLFDSDAEHLLADQLKERAELVNNLYKKADYTKALSELASLKEPIDIFFDKVMVMVDDKEKRENRLALLSSLQQLFSQIADISLLS.

Belongs to the class-II aminoacyl-tRNA synthetase family. As to quaternary structure, tetramer of two alpha and two beta subunits.

The protein resides in the cytoplasm. The catalysed reaction is tRNA(Gly) + glycine + ATP = glycyl-tRNA(Gly) + AMP + diphosphate. The sequence is that of Glycine--tRNA ligase beta subunit (glyS) from Coxiella burnetii (strain RSA 493 / Nine Mile phase I).